The primary structure comprises 225 residues: Probable GTP-binding protein EngB (225 aa).

The region spanning 31-204 is the EngB-type G domain; that stretch reads VGVEIAFAGR…LGILDSWCKP (174 aa). GTP-binding positions include 39–46, 65–69, 83–86, 150–153, and 183–185; these read GRSNAGKS, GRTQL, DLPG, TKAD, and FSS. Positions 46 and 67 each coordinate Mg(2+).

This sequence belongs to the TRAFAC class TrmE-Era-EngA-EngB-Septin-like GTPase superfamily. EngB GTPase family. Mg(2+) serves as cofactor.

Functionally, necessary for normal cell division and for the maintenance of normal septation. The chain is Probable GTP-binding protein EngB from Shewanella pealeana (strain ATCC 700345 / ANG-SQ1).